A 160-amino-acid polypeptide reads, in one-letter code: Inorganic pyrophosphatase (160 aa).

Substrate contacts are provided by Lys16, Arg28, and Tyr40. Residues Asp50, Asp55, and Asp87 each contribute to the Mg(2+) site. Tyr126 lines the substrate pocket.

This sequence belongs to the PPase family. Homohexamer. Mg(2+) serves as cofactor.

The protein localises to the cytoplasm. It carries out the reaction diphosphate + H2O = 2 phosphate + H(+). In terms of biological role, catalyzes the hydrolysis of inorganic pyrophosphate (PPi) forming two phosphate ions. The chain is Inorganic pyrophosphatase from Nanoarchaeum equitans (strain Kin4-M).